Here is a 3093-residue protein sequence, read N- to C-terminus: Intermembrane lipid transfer protein VPS13A (3093 aa).

A Chorein N-terminal domain is found at Phe3 to Lys116. A TPR 1 repeat occupies Leu373 to Glu406. At Ser839 the chain carries Phosphoserine. An FFAT motif is present at residues Glu842 to Cys848. Ser1416 is modified (phosphoserine). The 246-residue stretch at Val2209–Gly2454 folds into the SHR-BD domain. Residues Ile2860–Phe2898 form a TPR 2 repeat. Residues Pro2953–Ala3027 are required for lipid droplet localization.

This sequence belongs to the VPS13 family. In terms of assembly, interacts (via FFAT motif) with VAPA and VAPB. Interacts with RAB7A. Interacts with XK.

The protein resides in the mitochondrion outer membrane. It is found in the endoplasmic reticulum membrane. Its subcellular location is the endosome membrane. It localises to the lysosome membrane. The protein localises to the lipid droplet. The protein resides in the golgi apparatus. It is found in the cytoplasmic vesicle. Its subcellular location is the secretory vesicle. It localises to the neuronal dense core vesicle. Its function is as follows. Mediates the transfer of lipids between membranes at organelle contact sites. Required for the formation or stabilization of ER-mitochondria contact sites which enable transfer of lipids between the ER and mitochondria. Negatively regulates lipid droplet size and motility. Required for efficient lysosomal protein degradation. The protein is Intermembrane lipid transfer protein VPS13A (VPS13A) of Macaca fascicularis (Crab-eating macaque).